A 465-amino-acid polypeptide reads, in one-letter code: MASMSTVFPKPTSFISQPLTKSHKSDSVTTSISFPSNSKTRSLRTISVRAGLIEPDGGKLVDLVVPEPRRREKKHEAADLPRVRLTAIDLQWMHVLSEGWASPLRGFMRESEFLQTLHFNLLNLDDGSVVNMSVPIVLAIDDQQKALIGESKRVSLVDSDDNPIAILNDIEIYKHPKEERIARTWGTTAPGLPYVEEAITNAGDWLIGGDLEVLEPVKYNDGLDRFRLSPFELRKELEKRGADAVFAFQLRNPVHNGHALLMTDTRRRLLEMGYKNPILLLHPLGGFTKADDVPLSWRMKQHEKVLEDGVLDPETTVVSIFPSPMLYAGPTEVQWHAKARINAGANFYIVGRDPAGMGHPVEKRDLYDADHGKKVLSMAPGLERLNILPFRVAAYDKTQGKMAFFDPSRAQDFLFISGTKMRALAKNRENPPDGFMCPGGWKVLVDYYDSLTLTGNTKLPEKIPV.

A chloroplast-targeting transit peptide spans M1–R49.

Belongs to the sulfate adenylyltransferase family. As to quaternary structure, homotetramer.

The protein resides in the plastid. Its subcellular location is the chloroplast stroma. It catalyses the reaction sulfate + ATP + H(+) = adenosine 5'-phosphosulfate + diphosphate. It participates in sulfur metabolism; hydrogen sulfide biosynthesis; sulfite from sulfate: step 1/3. This Arabidopsis thaliana (Mouse-ear cress) protein is ATP-sulfurylase 3, chloroplastic (APS3).